The primary structure comprises 121 residues: uncharacterized protein (121 aa).

Residues Ile11–Phe31 traverse the membrane as a helical segment.

The protein resides in the membrane. This is an uncharacterized protein from Schizosaccharomyces pombe (strain 972 / ATCC 24843) (Fission yeast).